A 794-amino-acid chain; its full sequence is K(+)-insensitive pyrophosphate-energized proton pump (794 aa).

5 consecutive transmembrane segments (helical) span residues 20-40, 74-94, 102-122, 163-183, and 194-214; these read ALVAVIAVVALAALVLAGVLV, TLGVFAVVVFFLLMLLPADDW, IFFLIGAAFSAATGYIGMWLA, GVVGMFTVGLGLLGACCVVLV, and GFGLGAALIAMFMRVGGGIFT. Position 215 (lysine 215) interacts with substrate. Residues aspartate 218, aspartate 222, asparagine 245, and aspartate 248 each coordinate Mg(2+). 6 helical membrane passes run 264-284, 285-305, 321-341, 365-385, 422-442, and 446-466; these read YAVTLVAALILGKVAFGDFGL, AFPLLVPAIGVLTAMIGIFAV, GFFISAVISLVLVAVAVFVYL, ILALVAVAIGIVLAALIQQLT, AVYTALLIGLGVYGAFLLGGT, and LALFAVALAGTGLLTTVGVIV. Aspartate 476 is a Mg(2+) binding site. 3 consecutive transmembrane segments (helical) span residues 508 to 528, 564 to 584, and 641 to 661; these read AITKGIAIATAVLAAAALFGS, VGLIAGAAVVFLFSGLAINAV, and IFIGFTLGVGALGAFLAGAIG. Ca(2+) is bound by residues aspartate 678, aspartate 704, and aspartate 708. Lysine 711 is a substrate binding site. 2 consecutive transmembrane segments (helical) span residues 717–737 and 747–767; these read AINPLLKVMNLVALLIAPAVI and VVVRVLIAVVAFAVIAAAVYV.

It belongs to the H(+)-translocating pyrophosphatase (TC 3.A.10) family. K(+)-insensitive subfamily. In terms of assembly, homodimer. It depends on Mg(2+) as a cofactor.

The protein resides in the cell membrane. It carries out the reaction diphosphate + H2O + H(+)(in) = 2 phosphate + 2 H(+)(out). Functionally, proton pump that utilizes the energy of pyrophosphate hydrolysis as the driving force for proton movement across the membrane. Generates a proton motive force. The sequence is that of K(+)-insensitive pyrophosphate-energized proton pump from Streptomyces coelicolor (strain ATCC BAA-471 / A3(2) / M145).